Reading from the N-terminus, the 158-residue chain is Anaerobic ribonucleoside-triphosphate reductase-activating protein (158 aa).

The [4Fe-4S] cluster site is built by cysteine 26, cysteine 30, and cysteine 33. S-adenosyl-L-methionine-binding positions include 32 to 34 (GCY) and glycine 74.

This sequence belongs to the organic radical-activating enzymes family. In terms of assembly, forms a tetramer composed of two NrdD and two NrdG subunits. Requires [4Fe-4S] cluster as cofactor.

It is found in the cytoplasm. It carries out the reaction glycyl-[protein] + reduced [flavodoxin] + S-adenosyl-L-methionine = glycin-2-yl radical-[protein] + semiquinone [flavodoxin] + 5'-deoxyadenosine + L-methionine + H(+). Activation of anaerobic ribonucleoside-triphosphate reductase under anaerobic conditions by generation of an organic free radical, using S-adenosylmethionine and reduced flavodoxin as cosubstrates to produce 5'-deoxy-adenosine. The polypeptide is Anaerobic ribonucleoside-triphosphate reductase-activating protein (nrdG) (Pasteurella multocida (strain Pm70)).